Here is a 414-residue protein sequence, read N- to C-terminus: Tyrosine--tRNA ligase (414 aa).

Residue Tyr38 coordinates L-tyrosine. The 'HIGH' region signature appears at 43 to 52; sequence PTATSLHLGN. 2 residues coordinate L-tyrosine: Tyr165 and Gln169. The 'KMSKS' region signature appears at 228-232; the sequence is KFGKS. An ATP-binding site is contributed by Lys231. Positions 349-414 constitute an S4 RNA-binding domain; the sequence is FNANQIIDLG…KKYFFMIELI (66 aa).

It belongs to the class-I aminoacyl-tRNA synthetase family. TyrS type 1 subfamily. In terms of assembly, homodimer.

It is found in the cytoplasm. The enzyme catalyses tRNA(Tyr) + L-tyrosine + ATP = L-tyrosyl-tRNA(Tyr) + AMP + diphosphate + H(+). Catalyzes the attachment of tyrosine to tRNA(Tyr) in a two-step reaction: tyrosine is first activated by ATP to form Tyr-AMP and then transferred to the acceptor end of tRNA(Tyr). In Mesomycoplasma hyopneumoniae (strain 7448) (Mycoplasma hyopneumoniae), this protein is Tyrosine--tRNA ligase.